Here is a 401-residue protein sequence, read N- to C-terminus: Prion-like-(Q/N-rich) domain-bearing protein 8 (401 aa).

The segment covering 70–84 (QRSQNQNQNSNNPQQ) has biased composition (low complexity). 2 disordered regions span residues 70 to 109 (QRSQ…SNQQ) and 122 to 303 (YKNS…SNTQ). 2 stretches are compositionally biased toward polar residues: residues 89–109 (TSQS…SNQQ) and 125–134 (SEVTTSTPTP). 3 stretches are compositionally biased toward low complexity: residues 135 to 181 (NGFN…QNLG), 188 to 239 (NNQN…NQNG), and 247 to 289 (FSNG…QNPN).

In terms of tissue distribution, expressed in the pharyngeal glands.

This Caenorhabditis elegans protein is Prion-like-(Q/N-rich) domain-bearing protein 8 (pqn-8).